Consider the following 420-residue polypeptide: Histidine--tRNA ligase (420 aa).

Belongs to the class-II aminoacyl-tRNA synthetase family. As to quaternary structure, homodimer.

The protein localises to the cytoplasm. It catalyses the reaction tRNA(His) + L-histidine + ATP = L-histidyl-tRNA(His) + AMP + diphosphate + H(+). The polypeptide is Histidine--tRNA ligase (Nitrosomonas europaea (strain ATCC 19718 / CIP 103999 / KCTC 2705 / NBRC 14298)).